We begin with the raw amino-acid sequence, 332 residues long: Probable farnesyl diphosphate synthase (332 aa).

3 residues coordinate isopentenyl diphosphate: Lys75, Arg78, and His107. Mg(2+)-binding residues include Asp114 and Asp120. (2E)-geranyl diphosphate is bound at residue Arg125. Arg126 is an isopentenyl diphosphate binding site. Residues Lys208, Ser209, Gln250, and Lys267 each coordinate (2E)-geranyl diphosphate.

The protein belongs to the FPP/GGPP synthase family. Requires Mg(2+) as cofactor.

It is found in the cytoplasm. The enzyme catalyses isopentenyl diphosphate + (2E)-geranyl diphosphate = (2E,6E)-farnesyl diphosphate + diphosphate. The protein is Probable farnesyl diphosphate synthase (fppS) of Bradyrhizobium diazoefficiens (strain JCM 10833 / BCRC 13528 / IAM 13628 / NBRC 14792 / USDA 110).